We begin with the raw amino-acid sequence, 579 residues long: L-ascorbate oxidase (579 aa).

An N-terminal signal peptide occupies residues 1–30 (MLQMGKAREPNFLILFFFGLILAFGISSEG). 2 Plastocyanin-like domains span residues 33–152 (IRHY…LIVD) and 164–330 (DGEI…NYLP). Intrachain disulfides connect C49/C231, C111/C568, and C210/C223. Cu cation contacts are provided by H90 and H92. N122 carries an N-linked (GlcNAc...) asparagine glycan. Positions 134 and 136 each coordinate Cu cation. 2 N-linked (GlcNAc...) asparagine glycosylation sites follow: N355 and N470. One can recognise a Plastocyanin-like 3 domain in the interval 374-553 (NRRIFLLNTQ…HMGMGVVFAE (180 aa)). Cu cation is bound by residues H475, H478, H480, H536, C537, H538, H542, and M547.

This sequence belongs to the multicopper oxidase family. In terms of assembly, dimer. The cofactor is Cu cation.

The protein resides in the secreted. The enzyme catalyses 4 L-ascorbate + O2 = 4 monodehydro-L-ascorbate radical + 2 H2O. May be involved in a redox system involving ascorbic acid. In Cucurbita maxima (Pumpkin), this protein is L-ascorbate oxidase (AAO).